The sequence spans 409 residues: NADH-quinone oxidoreductase subunit D 1 (409 aa).

Belongs to the complex I 49 kDa subunit family. As to quaternary structure, NDH-1 is composed of 14 different subunits. Subunits NuoB, C, D, E, F, and G constitute the peripheral sector of the complex.

Its subcellular location is the cell inner membrane. The catalysed reaction is a quinone + NADH + 5 H(+)(in) = a quinol + NAD(+) + 4 H(+)(out). Its function is as follows. NDH-1 shuttles electrons from NADH, via FMN and iron-sulfur (Fe-S) centers, to quinones in the respiratory chain. The immediate electron acceptor for the enzyme in this species is believed to be ubiquinone. Couples the redox reaction to proton translocation (for every two electrons transferred, four hydrogen ions are translocated across the cytoplasmic membrane), and thus conserves the redox energy in a proton gradient. The protein is NADH-quinone oxidoreductase subunit D 1 of Solibacter usitatus (strain Ellin6076).